The primary structure comprises 314 residues: Putative S-adenosyl-L-methionine-dependent methyltransferase MAP_0256 (314 aa).

S-adenosyl-L-methionine contacts are provided by residues Asp132 and 161–162; that span reads DL.

It belongs to the UPF0677 family.

Its function is as follows. Exhibits S-adenosyl-L-methionine-dependent methyltransferase activity. The sequence is that of Putative S-adenosyl-L-methionine-dependent methyltransferase MAP_0256 from Mycolicibacterium paratuberculosis (strain ATCC BAA-968 / K-10) (Mycobacterium paratuberculosis).